An 895-amino-acid polypeptide reads, in one-letter code: Probable aminodeoxychorismate synthase, chloroplastic (895 aa).

Positions 1–45 (MAALRLPTPPPPRAPAPWLHSSHRRRVAAPRGAGGGGGGGGAVPP) are disordered. A chloroplast-targeting transit peptide spans 1-48 (MAALRLPTPPPPRAPAPWLHSSHRRRVAAPRGAGGGGGGGGAVPPPPV). A compositionally biased stretch (gly residues) spans 32-42 (GAGGGGGGGGA). The Glutamine amidotransferase type-1 domain maps to 49–307 (RTLLIDNYDS…KKITTDFGLQ (259 aa)). The active-site Nucleophile is C135. Residues H281 and E283 contribute to the active site. The segment at 387-875 (IFSVLFGHHS…KAKAPTKVVE (489 aa)) is PABB component.

It in the C-terminal section; belongs to the anthranilate synthase component I family.

The protein resides in the plastid. Its subcellular location is the chloroplast. It carries out the reaction chorismate + L-glutamine = 4-amino-4-deoxychorismate + L-glutamate. Its pathway is cofactor biosynthesis; tetrahydrofolate biosynthesis; 4-aminobenzoate from chorismate: step 1/2. It functions in the pathway antibiotic biosynthesis; candicidin biosynthesis. Bifunctional enzyme that catalyzes the biosynthesis of 4-amino-4-deoxychorismate (ADC) from chorismate and glutamine. In the first step, a glutamine amidotransferase generates ammonia that is channelled between the binding sites of glutamine and chorismate and used along with chorismate in the second step, catalyzed by aminodeoxychorismate synthase, to produce ADC. Required for the synthesis of 4-aminobenzoate (PABA), an important component in tetrahydrofolate biosynthesis. Does not possess ADC lyase activity. This Oryza sativa subsp. japonica (Rice) protein is Probable aminodeoxychorismate synthase, chloroplastic (ADCS).